The chain runs to 965 residues: MDFKENSIYINVMDKIYAREKEVLSQNQDFQENNLSRISLILNYEDFSLKFDESLHGYSFGYVTNPFGLKLHSPFTETVRFDGAEKYIYMKRILGVPSNETQLCNYQHQNFEEKDSQKELLPSPQQLTPPTSLPSLPLLPLPQAPEQNEEQQLTQPPSPPSIPPPPPQKKQIQIFITPSGIVSQKIQNFFRDTQIKSTDPVNCSLDHSIKKNYSLEEIYENNKNYMDKNNNFLHFLFTFIDKITIKDLDHFEKEINRVHNIKKLINQQNMKGETPLHSLIINNSESCLKKLVIAKINHMGIFDYSKCDNLNKNLLAHAIEKGDIDVIRLVLIGGCPLKMSPRSKLFKKNFKIYRQQIYRVFEIKEFLTKIGFNQYIPMFLEFEFKNININYLIESFKFKLNINEDEILLWKLLTEPYKNLDFKSFCSEYQIKHQNDLISETMANHFINVCQLNPHFGYIDFHTQIGSAGNASVFEGTYKGIPIACKEMPVSGTYEQSVDSIKEIAAVGQIKKLGCATVVETIGVLKYNQKLFLVMVKEKCNLLSFLCNKSEILKMQREGIWTSIFKISKDILKGLVSLREAGMYHRDFKTANFLVSNTGKILISDFGTSRDENEKRLNTFAKTIGTMWYRCPRLGDCSEDEKTLTHYNEKSEIYSLGIILWELVCVAMTGTYISPKIPLFQNEVDFLIWIHKDYRFSFPVGTPQSFVKLITRMCLPFRDRRPTVRQVLDNVKAIKKEFLSNRGIEGEQTYSGLECWREFNFSKQNVTRISISNLHNTEYKVVNKYDYASYNNKNSLLMKRYLDNSNFVVELINPNGLFRFKSFFEKEKLLYLKLKSTYKDEYYFDMSQFLTTIIQIHQITVIYYKMLQKYRELRLLRNNNNINKNKNNNNNNNNNNNNNNNINNNNTFNNSTNNNSNDNINIPYDFNNNNNNNNNSCNNSKKFKSISESTSALGLEASSSSSSSS.

Positions 114 to 170 (KDSQKELLPSPQQLTPPTSLPSLPLLPLPQAPEQNEEQQLTQPPSPPSIPPPPPQKK) are disordered. 2 stretches are compositionally biased toward low complexity: residues 119–136 (ELLPSPQQLTPPTSLPSL) and 144–155 (APEQNEEQQLTQ). The segment covering 156–168 (PPSPPSIPPPPPQ) has biased composition (pro residues). ANK repeat units lie at residues 271–301 (KGETPLHSLIINNSESCLKKLVIAKINHMGI) and 310–339 (LNKNLLAHAIEKGDIDVIRLVLIGGCPLKM). A Protein kinase domain is found at 459 to 739 (IDFHTQIGSA…NVKAIKKEFL (281 aa)). ATP-binding positions include 465–473 (IGSAGNASV) and Lys-486. Residue Asp-587 is the Proton acceptor of the active site. The helical transmembrane segment at 653–673 (IYSLGIILWELVCVAMTGTYI) threads the bilayer. 8 N-linked (GlcNAc...) asparagine glycosylation sites follow: Asn-760, Asn-765, Asn-905, Asn-909, Asn-910, Asn-914, Asn-934, and Asn-938. Residues 881–940 (NINKNKNNNNNNNNNNNNNNNINNNNTFNNSTNNNSNDNINIPYDFNNNNNNNNNSCNNS) are compositionally biased toward low complexity. Residues 881–942 (NINKNKNNNN…NNNSCNNSKK (62 aa)) form a disordered region.

The protein belongs to the protein kinase superfamily. Ser/Thr protein kinase family.

It localises to the membrane. It catalyses the reaction L-seryl-[protein] + ATP = O-phospho-L-seryl-[protein] + ADP + H(+). It carries out the reaction L-threonyl-[protein] + ATP = O-phospho-L-threonyl-[protein] + ADP + H(+). The protein is Probable serine/threonine-protein kinase DDB_G0291516 of Dictyostelium discoideum (Social amoeba).